Consider the following 471-residue polypeptide: Ubiquitin carboxyl-terminal hydrolase calypso (471 aa).

Residues 45–276 (GWLELESDPG…IRFNLMAVVP (232 aa)) form the UCH catalytic domain. The active-site Nucleophile is the cysteine 131. Histidine 213 (proton donor) is an active-site residue. Residues 375–403 (NYDKFICTFLSMLAHQGVLGELVSQHLLP) enclose the ULD domain. A positively charged C-terminal tail required for binding nucleosomes region spans residues 405–471 (KKVSGQGAAN…KGRNKCRKRK (67 aa)). Positions 410-471 (QGAANRISKQ…KGRNKCRKRK (62 aa)) are disordered. A compositionally biased stretch (low complexity) spans 420–447 (STTASAGGSTTGATASTPKTQQQQAAAA). Basic residues predominate over residues 457-471 (PGRRRKGRNKCRKRK).

This sequence belongs to the peptidase C12 family. BAP1 subfamily. In terms of assembly, catalytic component of the polycomb repressive deubiquitinase (PR-DUB) complex, at least composed of caly/calypso, Asx and sba (MBD5/6 homolog). The PR-DUB complex associates with nucleosomes to mediate deubiquitination of histone H2AK118ub1 substrates; the association requires the positively charged C-terminal tail of caly, probably due to direct binding of DNA. Interacts (via ULD domain) with Asx (via DEUBAD domain); the interaction produces a stable heterodimer with a composite binding site for ubiquitin. Homodimerizes (via coiled-coil hinge-region between the UCH and ULD domains) to mediate assembly of 2 copies of the caly-Asx heterodimer into a bisymmetric tetramer; dimerization enhances PR-DUB association with nucleosomes.

It localises to the nucleus. It carries out the reaction Thiol-dependent hydrolysis of ester, thioester, amide, peptide and isopeptide bonds formed by the C-terminal Gly of ubiquitin (a 76-residue protein attached to proteins as an intracellular targeting signal).. Its function is as follows. Catalytic component of the polycomb repressive deubiquitinase (PR-DUB) complex, a complex that specifically mediates deubiquitination of histone H2A monoubiquitinated at 'Lys-119' (H2AK118ub1). Mediates bisymmetric organization of the PR-DUB complex and is involved in association with nucleosomes to mediate deubiquitination. Does not deubiquitinate monoubiquitinated histone H2B. Required to maintain the transcriptionally repressive state of homeotic genes throughout development. The PR-DUB complex has weak or no activity toward 'Lys-48'- and 'Lys-63'-linked polyubiquitin chains. Polycomb group (PcG) protein. This Drosophila yakuba (Fruit fly) protein is Ubiquitin carboxyl-terminal hydrolase calypso.